The following is a 538-amino-acid chain: ATP synthase subunit alpha, mitochondrial (538 aa).

197 to 204 (GDRQTGKT) contacts ATP. Residues 228 to 248 (FCIYVAVGQKRSTVAQIVKRL) are essential and sufficient for enterobactin binding.

The protein belongs to the ATPase alpha/beta chains family. As to quaternary structure, subunit of the F-type ATPase which has 2 components, CF(1) - the catalytic core - and CF(0) - the membrane proton channel. As to expression, ubiquitous (at protein level).

The protein localises to the mitochondrion. It localises to the mitochondrion inner membrane. Functionally, mitochondrial membrane ATP synthase (F(1)F(0) ATP synthase or Complex V) produces ATP from ADP in the presence of a proton gradient across the membrane which is generated by electron transport complexes of the respiratory chain. F-type ATPases consist of two structural domains, F(1) - containing the extramembraneous catalytic core, and F(0) - containing the membrane proton channel, linked together by a central stalk and a peripheral stalk. During catalysis, ATP synthesis in the catalytic domain of F(1) is coupled via a rotary mechanism of the central stalk subunits to proton translocation. Subunits alpha and beta form the catalytic core in F(1). Rotation of the central stalk against the surrounding subunits leads to hydrolysis of ATP in three separate catalytic sites on the beta subunits. Subunit alpha does not bear the catalytic high-affinity ATP-binding sites. Binds the bacterial siderophore enterobactin and is required for the assimilation of enterobactin-bound iron from non-pathogenic bacteria. Promotes mitochondrial accumulation of enterobactin-derived iron ions. In Caenorhabditis elegans, this protein is ATP synthase subunit alpha, mitochondrial.